Reading from the N-terminus, the 60-residue chain is Large ribosomal subunit protein bL32 (60 aa).

A compositionally biased stretch (basic residues) spans 1-19; it reads MAVPKRKKSKSRRNMHRSH. The interval 1-24 is disordered; sequence MAVPKRKKSKSRRNMHRSHHAIEP.

The protein belongs to the bacterial ribosomal protein bL32 family.

In Wolbachia pipientis wMel, this protein is Large ribosomal subunit protein bL32.